A 116-amino-acid polypeptide reads, in one-letter code: MKTIIVFLSLLVLATKFGDAKEGVNQKQKKEVTQNEFREEYLNEMAAMSLVQQLEAIERALFENEAGRNSRQKRCNGENVPCGPNHSTCCSGLSCEETFGYGWWYASPYCVKPSKG.

The signal sequence occupies residues 1 to 20 (MKTIIVFLSLLVLATKFGDA). Positions 21-74 (KEGVNQKQKKEVTQNEFREEYLNEMAAMSLVQQLEAIERALFENEAGRNSRQKR) are excised as a propeptide. 3 cysteine pairs are disulfide-bonded: cysteine 75–cysteine 90, cysteine 82–cysteine 95, and cysteine 89–cysteine 110.

Belongs to the neurotoxin 14 (magi-1) family. 06 (ICK-Trit) subfamily. Expressed by the venom gland.

It localises to the secreted. Its function is as follows. Ion channel inhibitor. This chain is U16-barytoxin-Tl1b, found in Trittame loki (Brush-footed trapdoor spider).